The primary structure comprises 133 residues: Fluoride-specific ion channel FluC (133 aa).

Transmembrane regions (helical) follow at residues 5-25, 43-63, 76-96, and 108-128; these read VPATSLILWLAVALGGALGAL, VATLTVNVLGSFLMGVFYVVI, VIMIGFLGAFTTFSTFSIESL, and ISYVVANVVLSISAVVVAIVL. Na(+)-binding residues include Gly83 and Thr86.

Belongs to the fluoride channel Fluc/FEX (TC 1.A.43) family.

Its subcellular location is the cell inner membrane. It catalyses the reaction fluoride(in) = fluoride(out). Na(+) is not transported, but it plays an essential structural role and its presence is essential for fluoride channel function. Its function is as follows. Fluoride-specific ion channel. Important for reducing fluoride concentration in the cell, thus reducing its toxicity. The polypeptide is Fluoride-specific ion channel FluC (Saccharophagus degradans (strain 2-40 / ATCC 43961 / DSM 17024)).